We begin with the raw amino-acid sequence, 156 residues long: Putative pre-16S rRNA nuclease (156 aa).

This sequence belongs to the YqgF nuclease family.

It is found in the cytoplasm. Its function is as follows. Could be a nuclease involved in processing of the 5'-end of pre-16S rRNA. This chain is Putative pre-16S rRNA nuclease, found in Ehrlichia chaffeensis (strain ATCC CRL-10679 / Arkansas).